A 251-amino-acid chain; its full sequence is 5'-nucleotidase SurE (251 aa).

A divalent metal cation contacts are provided by D9, D10, S40, and N94.

It belongs to the SurE nucleotidase family. A divalent metal cation is required as a cofactor.

The protein localises to the cytoplasm. The enzyme catalyses a ribonucleoside 5'-phosphate + H2O = a ribonucleoside + phosphate. Nucleotidase that shows phosphatase activity on nucleoside 5'-monophosphates. This Aquifex aeolicus (strain VF5) protein is 5'-nucleotidase SurE.